The chain runs to 650 residues: MSTQSLYKVSSEIAENAHINEEQYKKMYQESIVNPEGFWREHGQRIDWIKPYTKIKKTSFDDHNLSINWFYDGTLNASANCLDRHLEKDSDKVAIIWEGDDAKDQRTITYGELHSDVCKFANALRSQGVRRGDIVTVYMPMVPEAAVVMLACARIGAVHSVVFGGFSPDSIASRVIDGKSKVIITADEGVRGGRIIPLKANIDEALSHPDVDCVEKVIVLERTGGDVNWVEGRDIKWESLMDTASEHCIPEEMGAEDPLFLLYTSGSTGNPKGVLHTTGGYMVYAAMTHEYVFDYKDGEVYWCTADVGWITGHSYMVYGPLANGATVLIHEGVPNYPTPARLGEMVDRHKVNILYTAPTLIRALMAEGKEQFADFDGSSLRIMGSVGEPINPEAWRWYNEVIGHEHCPIVDTWWQTETGGILISPLPGATDTKPGSATRPFFGVQPALVDNMGNIIDGATEGNLVILDSWPGQMRTVFGDHDRFALTYFKTFRGMYFTGDGAKRDEDGYYWITGRVDDVINVSGHRLGTAEVESALVAHEHVAEAAVVGYPHDIKGQGIYAYVTLTKGTIETEELRQELRKWVRKEIGALATPDLIQWAGGLPKTRSGKIMRRFLRKIAANEVTNLGDSSTLADPAVIDTLIESRLNRSE.

Residues 191 to 194 (RGGR), T311, and N335 each bind CoA. Residues 387–389 (GEP), 411–416 (DTWWQT), D500, and R515 contribute to the ATP site. S523 is a binding site for CoA. An ATP-binding site is contributed by R526. Residues V537, H539, and V542 each contribute to the Mg(2+) site. CoA is bound at residue R584. K609 is modified (N6-acetyllysine).

The protein belongs to the ATP-dependent AMP-binding enzyme family. Mg(2+) is required as a cofactor. In terms of processing, acetylated. Deacetylation by the SIR2-homolog deacetylase activates the enzyme.

The enzyme catalyses acetate + ATP + CoA = acetyl-CoA + AMP + diphosphate. Catalyzes the conversion of acetate into acetyl-CoA (AcCoA), an essential intermediate at the junction of anabolic and catabolic pathways. AcsA undergoes a two-step reaction. In the first half reaction, AcsA combines acetate with ATP to form acetyl-adenylate (AcAMP) intermediate. In the second half reaction, it can then transfer the acetyl group from AcAMP to the sulfhydryl group of CoA, forming the product AcCoA. The protein is Acetyl-coenzyme A synthetase of Shewanella sediminis (strain HAW-EB3).